A 401-amino-acid chain; its full sequence is Acetate kinase (401 aa).

Asn-7 is a Mg(2+) binding site. Lys-14 contacts ATP. Residue Arg-92 participates in substrate binding. The Proton donor/acceptor role is filled by Asp-149. ATP-binding positions include 209-213 (HLGNG), 283-285 (DAR), and 331-335 (GLGEN). Glu-385 contributes to the Mg(2+) binding site.

The protein belongs to the acetokinase family. As to quaternary structure, homodimer. It depends on Mg(2+) as a cofactor. The cofactor is Mn(2+).

It is found in the cytoplasm. It carries out the reaction acetate + ATP = acetyl phosphate + ADP. Its pathway is metabolic intermediate biosynthesis; acetyl-CoA biosynthesis; acetyl-CoA from acetate: step 1/2. Functionally, catalyzes the formation of acetyl phosphate from acetate and ATP. Can also catalyze the reverse reaction. The protein is Acetate kinase of Helicobacter pylori (strain Shi470).